The chain runs to 213 residues: MDLCRSSILLLIIALLSPRTLSMRYELKSSKTKCIGEEIHENAMSIGKYFIVNPNEDNHPLPDSHKIIVKVMPPQGKNLHEADKVEAGQFSFTAYENGSYVACITAIDYKPETTLTIDFDWKTGVHSKEWTNVAKKSQVDMMEYQVKTLMDTVISIHEEMYYLREREEEMQELNRSTNSKMAWLSFGSLVVCLSVAGLQFWHLKTFFEKKKLI.

The first 22 residues, 1–22 (MDLCRSSILLLIIALLSPRTLS), serve as a signal peptide directing secretion. The Lumenal segment spans residues 23–180 (MRYELKSSKT…QELNRSTNSK (158 aa)). The GOLD domain maps to 32–148 (TKCIGEEIHE…VDMMEYQVKT (117 aa)). N-linked (GlcNAc...) asparagine glycosylation is present at Asn-97. A coiled-coil region spans residues 163–176 (LREREEEMQELNRS). Arg-166 carries the post-translational modification Omega-N-methylated arginine. Asn-174 carries an N-linked (GlcNAc...) asparagine glycan. A helical transmembrane segment spans residues 181 to 203 (MAWLSFGSLVVCLSVAGLQFWHL). The tract at residues 202–213 (HLKTFFEKKKLI) is interaction with ARF1. The Cytoplasmic portion of the chain corresponds to 204–213 (KTFFEKKKLI). The COPII vesicle coat-binding motif lies at 206–207 (FF). Positions 206–213 (FFEKKKLI) match the COPI vesicle coat-binding motif.

Belongs to the EMP24/GP25L family. In terms of assembly, probably oligomerizes with other members of the EMP24/GP25L family. Associates with the COPI vesicle coat (coatomer). Associates with the COPII vesicle coat (coatomer). Interacts with ARF1 (GDP-bound).

It localises to the endoplasmic reticulum membrane. The protein resides in the golgi apparatus. The protein localises to the cis-Golgi network membrane. Its subcellular location is the golgi stack membrane. Its function is as follows. Involved in vesicular protein trafficking. Mainly functions in the early secretory pathway. Thought to act as cargo receptor at the lumenal side for incorporation of secretory cargo molecules into transport vesicles and to be involved in vesicle coat formation at the cytoplasmic side. On Golgi membranes, acts as a primary receptor for ARF1-GDP which is involved in COPI-vesicle formation. This is Transmembrane emp24 domain-containing protein p24delta8 from Arabidopsis thaliana (Mouse-ear cress).